The following is a 906-amino-acid chain: Cadherin-2 (906 aa).

The first 25 residues, 1–25, serve as a signal peptide directing secretion; the sequence is MCRIAGAPRTLLPLLAALLQASVEA. A propeptide spanning residues 26–159 is cleaved from the precursor; that stretch reads SGEIALCKTG…HSGALQRQKR (134 aa). Cadherin domains are found at residues 160–267, 268–382, 383–497, 498–603, and 604–717; these read DWVI…RPEF, LHQV…PPEF, TAMT…NPYF, APNP…DNAP, and QVLP…RIVG. The Extracellular portion of the chain corresponds to 160–724; the sequence is DWVIPPINLP…IVGAGLGTGA (565 aa). E170 contacts Ca(2+). N190 is a glycosylation site (N-linked (GlcNAc...) asparagine). Positions 226, 228, 259, 260, 261, 262, and 263 each coordinate Ca(2+). A glycan (N-linked (GlcNAc...) asparagine) is linked at N273. D293, D295, and N301 together coordinate Ca(2+). A glycan (N-linked (GlcNAc...) asparagine) is linked at N325. A Ca(2+)-binding site is contributed by D353. Residues N402, N572, N651, and N692 are each glycosylated (N-linked (GlcNAc...) asparagine). The chain crosses the membrane as a helical span at residues 725–745; that stretch reads IIAILLCIIILLILVLMFVVW. At 746–906 the chain is on the cytoplasmic side; that stretch reads MKRRDKERQA…LADMYGGGDD (161 aa). Low complexity predominate over residues 863–880; the sequence is SGSTAGSLSSLNSSSSGG. The tract at residues 863-883 is disordered; the sequence is SGSTAGSLSSLNSSSSGGDQD.

Homodimer (via extracellular region). Can also form heterodimers with other cadherins (via extracellular region). Dimerization occurs in trans, i.e. with a cadherin chain from another cell. Interacts with CDCP1. Interacts with PCDH8; this complex may also include TAOK2. The interaction with PCDH8 may lead to internalization through TAOK2/p38 MAPK pathway. Identified in a complex containing FGFR4, NCAM1, CDH2, PLCG1, FRS2, SRC, SHC1, GAP43 and CTTN. May interact with OBSCN (via protein kinase domain 2). Interacts with FBXO45. In terms of processing, cleaved by MMP24. Ectodomain cleavage leads to the generation of a soluble 90 kDa N-terminal soluble fragment and a 45 kDa membrane-bound C-terminal fragment 1 (CTF1), which is further cleaved by gamma-secretase into a 35 kDa. Cleavage in neural stem cells by MMP24 affects CDH2-mediated anchorage of neural stem cells to ependymocytes in the adult subependymal zone, leading to modulate neural stem cell quiescence. May be phosphorylated by OBSCN. Post-translationally, O-glycosylated on Ser and Thr residues. In terms of tissue distribution, expressed in cardiac muscle (at protein level).

The protein localises to the cell membrane. Its subcellular location is the sarcolemma. It is found in the cell junction. The protein resides in the adherens junction. It localises to the desmosome. The protein localises to the cell surface. Functionally, calcium-dependent cell adhesion protein; preferentially mediates homotypic cell-cell adhesion by dimerization with a CDH2 chain from another cell. Cadherins may thus contribute to the sorting of heterogeneous cell types. Acts as a regulator of neural stem cells quiescence by mediating anchorage of neural stem cells to ependymocytes in the adult subependymal zone: upon cleavage by MMP24, CDH2-mediated anchorage is affected, leading to modulate neural stem cell quiescence. Plays a role in cell-to-cell junction formation between pancreatic beta cells and neural crest stem (NCS) cells, promoting the formation of processes by NCS cells. Required for proper neurite branching. Required for pre- and postsynaptic organization. CDH2 may be involved in neuronal recognition mechanism. In hippocampal neurons, may regulate dendritic spine density. The protein is Cadherin-2 (Cdh2) of Mus musculus (Mouse).